We begin with the raw amino-acid sequence, 506 residues long: MADINTAQPRDWLLEMSNIDKSFPGVKALDNVNLKVRPYSIHALMGENGAGKSTLLKCLFGIYKKDSGSIIFQGQEIEFKSSKEALEQGVSMVHQELNLVLQRTVMDNMWLGRYPTKGFFVDQDKMYKETKAIFDELDIDIDPRDKVATLSVSQMQMIEIAKAFSYNAKIVIMDEPTSSLTEKEVNHLFTIIRKLKARGCGIVYISHKMEEIFQLCDEITILRDGQWITTQPLDGLTMDQIISMMVGRSLSQRFPDRLNKPGEVILEVKNLTSLRQPSIRDVSFDLHKGEILGIAGLVGAKRTDIVETLFGIREKVTGTIKLHGKNINNHSANEAINHGFALVTEERRSTGIYAYLDISFNSLISNIRNYKNKFGLLDNTRMKSDTQWVIDAMRVKTPGHRTNIGSLSGGNQQKVIIGRWLLTQPEILMLDEPTRGIDVGAKFEIYQLMTELAKKDKGIIIISSEMPELLGITDRILVMSNGQVAGIVDTKQTTQNEILRLASLHL.

ABC transporter domains lie at 14-249 and 264-506; these read LEMS…VGRS and VILE…SLHL. 46–53 provides a ligand contact to ATP; it reads GENGAGKS.

It belongs to the ABC transporter superfamily. Galactose/methyl galactoside importer (TC 3.A.1.2.3) family. The complex is composed of one ATP-binding protein (MglA), two transmembrane proteins (MglC) and a solute-binding protein (MglB).

The protein resides in the cell inner membrane. It catalyses the reaction D-galactose(out) + ATP + H2O = D-galactose(in) + ADP + phosphate + H(+). It carries out the reaction methyl beta-D-galactoside(out) + ATP + H2O = methyl beta-D-galactoside(in) + ADP + phosphate + H(+). In terms of biological role, part of the ABC transporter complex MglABC involved in galactose/methyl galactoside import. Responsible for energy coupling to the transport system. This Yersinia pestis bv. Antiqua (strain Antiqua) protein is Galactose/methyl galactoside import ATP-binding protein MglA.